The sequence spans 253 residues: Triosephosphate isomerase, cytosolic (253 aa).

Substrate-binding residues include Asn-10 and Lys-12. The Electrophile role is filled by His-96. Glu-166 (proton acceptor) is an active-site residue.

This sequence belongs to the triosephosphate isomerase family. As to quaternary structure, homodimer.

Its subcellular location is the cytoplasm. It catalyses the reaction D-glyceraldehyde 3-phosphate = dihydroxyacetone phosphate. It functions in the pathway carbohydrate biosynthesis; gluconeogenesis. It participates in carbohydrate degradation; glycolysis; D-glyceraldehyde 3-phosphate from glycerone phosphate: step 1/1. This is Triosephosphate isomerase, cytosolic from Zea mays (Maize).